The following is a 639-amino-acid chain: Chaperone protein DnaK (639 aa).

Thr198 bears the Phosphothreonine; by autocatalysis mark. Residues 601 to 639 are disordered; that stretch reads AQQAPGADSCGGDCGQQQEAGAKPKDEKVVDADFEEVKK. Over residues 622–639 the composition is skewed to basic and acidic residues; that stretch reads AKPKDEKVVDADFEEVKK.

This sequence belongs to the heat shock protein 70 family.

In terms of biological role, acts as a chaperone. The chain is Chaperone protein DnaK from Trichlorobacter lovleyi (strain ATCC BAA-1151 / DSM 17278 / SZ) (Geobacter lovleyi).